The sequence spans 970 residues: MSRSTRSKERRENDTDSEDNSSETSNQERRRCRQGPPRPPYPPLLPPVFPPPTPPPQVRRTRGLQDLGAMKSVCPGTSGFSSPNPSAASAAAQEVRSATDGNTSTTPPTSAKKRKLNSSSSSSNSSNEREDFDSTSSSSTPPQPRDSASPSTSSFCLGVPVATSSHVPIQKKLRFEDTLEFVGIDTKMAEESSSSSSSSSPTAATSQQQQQQQLKTKSILISSVASVHHANGLAKSSTAVSSFANSKPGSAKKLVIKNFKDKPKLPENYTDETWQKLKEAVEAIQNSTSIKYNLEELYQAVENLCSHKISANLYKQLRQICEDHIKAQIHQFREDSLDSVLFLKKIDRCWQNHCRQMIMIRSIFLFLDRTYVLQNSMLPSIWDMGLELFRAHIISDQKVQTKTIDGILLLIERERNGEAIDRSLLRSLLSMLSDLQIYQDSFEQQFLQETNRLYAAEGQKLMQEREVPEYLHHVNKRLEEEADRLITYLDQTTQKSLIASVEKQLLGEHLTAILQKGLNSLLDENRIQDLSLLYQLFSRVRGGVQVLLQQWIEYIKAFGSTIVINPEKDKTMVQELLDFKDKVDHIIDTCFLKNEKFINAMKEAFETFINKRPNKPAELIAKYVDSKLRAGNKEATDEELEKMLDKIMIIFRFIYGKDVFEAFYKKDLAKRLLVGKSASVDAEKSMLSKLKHECGAAFTSKLEGMFKDMELSKDIMIQFKQYMQNQNVPGNIELTVNILTMGYWPTYVPMEVHLPPEMVKLQEIFKTFYLGKHSGRKLQWQSTLGHCVLKAEFKEGKKELQVSLFQTMVLLMFNEGEEFSLEEIKHATGIEDGELRRTLQSLACGKARVLAKNPKGKDIEDGDKFICNDDFKHKLFRIKINQIQMKETVEEQASTTERVFQDRQYQIDAAIVRIMKMRKTLSHNLLVSEVYNQLKFPVKPADLKKRIESLIDRDYMERDKENPNQYNYIA.

The span at methionine 1–aspartate 14 shows a compositional bias: basic and acidic residues. Disordered regions lie at residues methionine 1–leucine 157 and alanine 189–glutamine 211. At threonine 15 the chain carries Phosphothreonine. At serine 17 the chain carries Phosphoserine. Pro residues predominate over residues proline 36 to glutamine 57. Over residues serine 78–alanine 98 the composition is skewed to low complexity. The span at threonine 99 to threonine 109 shows a compositional bias: polar residues. Position 106 is a phosphothreonine (threonine 106). Position 110 is a phosphoserine (serine 110). A Nuclear localization signal motif is present at residues lysine 112 to lysine 115. A compositionally biased stretch (low complexity) spans asparagine 117–serine 126. Polar residues predominate over residues aspartate 146 to phenylalanine 155. Serine 154 and serine 200 each carry phosphoserine. Residues serine 192–glutamine 211 are compositionally biased toward low complexity. The residue at position 202 (threonine 202) is a Phosphothreonine. Lysine 247 is covalently cross-linked (Glycyl lysine isopeptide (Lys-Gly) (interchain with G-Cter in ubiquitin)). Phosphoserine is present on serine 250. The region spanning aspartate 902 to asparagine 962 is the Cullin neddylation domain. Lysine 916 participates in a covalent cross-link: Glycyl lysine isopeptide (Lys-Gly) (interchain with G-Cter in NEDD8).

Belongs to the cullin family. Component of multiple DCX (DDB1-CUL4-X-box) E3 ubiquitin-protein ligase complexes that seem to be formed of DDB1, CUL4A or CUL4B, RBX1 and a variable substrate recognition component which seems to belong to a protein family described as DCAF (Ddb1- and Cul4-associated factor) or CDW (CUL4-DDB1-associated WD40-repeat) proteins. Component of the DCX(DTL) complex with the putative substrate recognition component DTL. Component of the DCX(DDB2) complex with the putative substrate recognition component DDB2. Component of DCX complexes part of the DesCEND (destruction via C-end degrons) pathway, which contain either TRPC4AP or DCAF12 as substrate-recognition component. Component of the DCX(AMBRA1) complex with the substrate recognition component AMBRA1. Part of a complex with RBX1 and TIP120A/CAND1. Component of the DCX(WDR77) complex, composed of Cul4b, Ddb1, Wdr77 and Rbx1. Interacts with RBX1, GRWD1, MLST8, SMU1, TLE2, TLE3, DCAF1, DDA1, DCAF6, DCAF17, DDB2, DCAF8, TIP120A/CAND1 and TMEM113. Interacts with cyclin E (CCNE1 or CCNE2) and with importins alpha-1 (KPNA2), alpha-3 (KPNA4), alpha-5 (KPNA1) and beta-1 (KPNB1). May interact with WDR26, WDR51B, SNRNP40, WDR61, WDR76 and WDR5. Interacts (unneddylated form) with DCUN1D1, DCUN1D2, DCUN1D3, DCUN1D4 and DCUN1D5; these interactions promote the cullin neddylation. Post-translationally, neddylated. Deneddylated via its interaction with the COP9 signalosome (CSN) complex. As to expression, expressed in oocytes (at protein level).

It localises to the cytoplasm. The protein resides in the nucleus. Its pathway is protein modification; protein ubiquitination. Core component of multiple cullin-RING-based E3 ubiquitin-protein ligase complexes which mediate the ubiquitination and subsequent proteasomal degradation of target proteins. The functional specificity of the E3 ubiquitin-protein ligase complex depends on the variable substrate recognition subunit. CUL4B may act within the complex as a scaffold protein, contributing to catalysis through positioning of the substrate and the ubiquitin-conjugating enzyme. Plays a role as part of the E3 ubiquitin-protein ligase complex in polyubiquitination of CDT1, histone H2A, histone H3 and histone H4 in response to radiation-induced DNA damage. Targeted to UV damaged chromatin by DDB2 and may be important for DNA repair and DNA replication. A number of DCX complexes (containing either TRPC4AP or DCAF12 as substrate-recognition component) are part of the DesCEND (destruction via C-end degrons) pathway, which recognizes a C-degron located at the extreme C terminus of target proteins, leading to their ubiquitination and degradation. The DCX(AMBRA1) complex is a master regulator of the transition from G1 to S cell phase by mediating ubiquitination of phosphorylated cyclin-D (CCND1, CCND2 and CCND3). The DCX(AMBRA1) complex also acts as a regulator of Cul5-RING (CRL5) E3 ubiquitin-protein ligase complexes by mediating ubiquitination and degradation of Elongin-C (ELOC) component of CRL5 complexes. Required for ubiquitination of cyclin E (CCNE1 or CCNE2), and consequently, normal G1 cell cycle progression. Component of the DCX(WDR77) complex, which mediates ubiquitination and degradation of Irgm1 in intestinal cells. Regulates the mammalian target-of-rapamycin (mTOR) pathway involved in control of cell growth, size and metabolism. Specific CUL4B regulation of the mTORC1-mediated pathway is dependent upon 26S proteasome function and requires interaction between CUL4B and MLST8. With CUL4A, contributes to ribosome biogenesis. The chain is Cullin-4B from Mus musculus (Mouse).